The sequence spans 548 residues: Cytochrome P450 monooxygenase lcsK (548 aa).

A run of 2 helical transmembrane segments spans residues 28-48 (HAYP…LWAF) and 68-88 (VLLF…RLFF). N-linked (GlcNAc...) asparagine glycans are attached at residues Asn-172, Asn-223, Asn-242, and Asn-404. Cys-487 provides a ligand contact to heme.

Belongs to the cytochrome P450 family. The cofactor is heme.

It localises to the membrane. The protein operates within secondary metabolite biosynthesis. Its function is as follows. Cytochrome P450 monooxygenase; part of the gene cluster that mediates the biosynthesis of the lipopeptide antibiotics leucinostatins that show extensive biological activities, including antimalarial, antiviral, antibacterial, antifungal, and antitumor activities, as well as phytotoxic. Leucinostatin A contains nine amino acid residues, including the unusual amino acid 4-methyl-L-proline (MePro), 2-amino-6-hydroxy-4-methyl-8-oxodecanoic acid (AHyMeOA), 3-hydroxyleucine (HyLeu), alpha-aminoisobutyric acid (AIB), beta-Ala, a 4-methylhex-2-enoic acid at the N-terminus as well as a N1,N1-dimethylpropane-1,2-diamine (DPD) at the C-terminus. The biosynthesis of leucinostatins is probably initiated with the assembly of 4-methylhex-2-enoic acid by a reducing PKS. Two reducing polyketide synthases, lcsB and lcsC, have been identified in the cluster and it is not clear which is the one that assembles 4-methylhex-2-enoic acid since both contain KS, AT, DH, cMT, ER, KR and ACP domains. The polyketide residue might be transferred to the NRPS lcsA, mediated by two additional enzymes, the acyl-CoA ligase lcsD and the thioesterase lcsE. The linear polyketide carboxylic acid, which is released from PKS, is converted to a CoA thioester by lcsD, and then lcsE hydrolyzes the thiol bond and shuttles the polyketide intermediate to lcsA. The C domain of the first module catalyzed the condensation of 4-methylhex-2-enoic acid and MePro carried by domain A1, followed by successive condensations of nine amino acids to trigger the elongation of the linear peptide. A5 and A6 domains of lcsA are proposed to incorporate leucine, A2 AHyMeOA, and A3 incorporates HyLeu. A4, A7 and A8 incorporate AIB. The AHyMeOA in leucinostatin A activated by the A2 might be produced by the second PKS (lcsB or lcsC) present within the cluster. The MePro is probably produced via leucine cyclization and may originate from a separate pathway, independent of the cluster. Another nonproteinogenic amino acid, beta-Ala, could be produced by an aspartic acid decarboxylase also localized outside of the cluster. Two candidates are VFPBJ_01400 and VFPBJ_10476. The final peptide scaffold may be released by the NAD(P)H-dependent thioester reductase (TE) at the C-terminal region of lcsA. Transamination of the lcsA product by the transaminase lcsP may produce DPD at the C-terminus. Further hydroxylation steps performed alternatively by the cytochrome P450 monooxygenases lcsI, lcsK and lcsN then yield the non-methylated leucinostatins precursor. It is also possible that leucines can be hydroxylated prior to their incorporation into the peptide. Varying extents of methylation then lead to the formation of leucinostatins A and B. This Purpureocillium lilacinum (Paecilomyces lilacinus) protein is Cytochrome P450 monooxygenase lcsK.